The following is a 370-amino-acid chain: Dual-specificity RNA methyltransferase RlmN (370 aa).

Glu93 acts as the Proton acceptor in catalysis. The Radical SAM core domain occupies 99 to 331 (DRKRGTLCVS…TRVRRTRGDD (233 aa)). The cysteines at positions 106 and 336 are disulfide-linked. The [4Fe-4S] cluster site is built by Cys113, Cys117, and Cys120. S-adenosyl-L-methionine contacts are provided by residues 162-163 (GE), Ser194, 216-218 (SLH), and Asn293. Cys336 functions as the S-methylcysteine intermediate in the catalytic mechanism.

The protein belongs to the radical SAM superfamily. RlmN family. It depends on [4Fe-4S] cluster as a cofactor.

It localises to the cytoplasm. The enzyme catalyses adenosine(2503) in 23S rRNA + 2 reduced [2Fe-2S]-[ferredoxin] + 2 S-adenosyl-L-methionine = 2-methyladenosine(2503) in 23S rRNA + 5'-deoxyadenosine + L-methionine + 2 oxidized [2Fe-2S]-[ferredoxin] + S-adenosyl-L-homocysteine. It carries out the reaction adenosine(37) in tRNA + 2 reduced [2Fe-2S]-[ferredoxin] + 2 S-adenosyl-L-methionine = 2-methyladenosine(37) in tRNA + 5'-deoxyadenosine + L-methionine + 2 oxidized [2Fe-2S]-[ferredoxin] + S-adenosyl-L-homocysteine. In terms of biological role, specifically methylates position 2 of adenine 2503 in 23S rRNA and position 2 of adenine 37 in tRNAs. m2A2503 modification seems to play a crucial role in the proofreading step occurring at the peptidyl transferase center and thus would serve to optimize ribosomal fidelity. This is Dual-specificity RNA methyltransferase RlmN from Coxiella burnetii (strain CbuK_Q154) (Coxiella burnetii (strain Q154)).